The primary structure comprises 320 residues: Olfactory receptor 2C3 (320 aa).

At 1–26 the chain is on the extracellular side; that stretch reads MMEIANVSSPEVFVLLGFSTRPSLET. Asparagine 6 carries an N-linked (GlcNAc...) asparagine glycan. The chain crosses the membrane as a helical span at residues 27–50; sequence VLFIVVLSFYMVSILGNGIIILVS. The Cytoplasmic portion of the chain corresponds to 51–58; the sequence is HTDVHLHT. The helical transmembrane segment at 59-80 threads the bilayer; it reads PMYFFLANLPFLDMSFTTSIVP. Topologically, residues 81–101 are extracellular; that stretch reads QLLANLWGPQKTISYGGCVVQ. The cysteines at positions 98 and 190 are disulfide-linked. A helical membrane pass occupies residues 102 to 121; the sequence is FYISHWLGATECVLLATMSY. Residues 122–140 lie on the Cytoplasmic side of the membrane; it reads DRYAAICRPLHYTVIMHPQ. A helical membrane pass occupies residues 141–159; it reads LCLGLALASWLGGLTTSMV. The Extracellular segment spans residues 160-196; the sequence is GSTLTMLLPLCGNNCIDHFFCEMPLIMQLACVDTSLN. Residues 197–220 form a helical membrane-spanning segment; that stretch reads EMEMYLASFVFVVLPLGLILVSYG. Topologically, residues 221–237 are cytoplasmic; the sequence is HIARAVLKIRSAEGRRK. The helical transmembrane segment at 238-260 threads the bilayer; that stretch reads AFNTCSSHVAVVSLFYGSIIFMY. Over 261 to 273 the chain is Extracellular; that stretch reads LQPAKSTSHEQGK. A helical membrane pass occupies residues 274–293; that stretch reads FIALFYTVVTPALNPLIYTL. The Cytoplasmic segment spans residues 294–320; the sequence is RNTEVKSALRHMVLENCCGSAGKLAQI.

This sequence belongs to the G-protein coupled receptor 1 family.

Its subcellular location is the cell membrane. Functionally, odorant receptor. In Homo sapiens (Human), this protein is Olfactory receptor 2C3 (OR2C3).